The following is a 693-amino-acid chain: Polyribonucleotide nucleotidyltransferase (693 aa).

Residues aspartate 485 and aspartate 491 each contribute to the Mg(2+) site. In terms of domain architecture, KH spans 552–611 (PRIETMQINTSKIATVIGPGGKQIRQIIERSGAQVDINDNGLINISANTQESIDKAKELI). The 69-residue stretch at 621 to 689 (GKIYNGRVTS…EKGQLKLSHK (69 aa)) folds into the S1 motif domain.

This sequence belongs to the polyribonucleotide nucleotidyltransferase family. Mg(2+) is required as a cofactor.

Its subcellular location is the cytoplasm. The enzyme catalyses RNA(n+1) + phosphate = RNA(n) + a ribonucleoside 5'-diphosphate. Its function is as follows. Involved in mRNA degradation. Catalyzes the phosphorolysis of single-stranded polyribonucleotides processively in the 3'- to 5'-direction. This Chlamydia muridarum (strain MoPn / Nigg) protein is Polyribonucleotide nucleotidyltransferase.